Reading from the N-terminus, the 346-residue chain is Phosphoribosylformylglycinamidine cyclo-ligase (346 aa).

It belongs to the AIR synthase family.

It localises to the cytoplasm. It carries out the reaction 2-formamido-N(1)-(5-O-phospho-beta-D-ribosyl)acetamidine + ATP = 5-amino-1-(5-phospho-beta-D-ribosyl)imidazole + ADP + phosphate + H(+). It participates in purine metabolism; IMP biosynthesis via de novo pathway; 5-amino-1-(5-phospho-D-ribosyl)imidazole from N(2)-formyl-N(1)-(5-phospho-D-ribosyl)glycinamide: step 2/2. The chain is Phosphoribosylformylglycinamidine cyclo-ligase from Brevibacillus brevis (strain 47 / JCM 6285 / NBRC 100599).